The primary structure comprises 510 residues: NAD(P)H-quinone oxidoreductase subunit 2 A, chloroplastic (510 aa).

12 helical membrane-spanning segments follow: residues 31–51 (FIFP…IDLT), 59–79 (WFYF…LFRW), 99–119 (IFQF…VEYI), 124–144 (MAIT…MFLC), 149–169 (LITI…LSGY), 183–203 (YLLM…WLYG), 229–249 (ISIA…PAPF), 295–315 (WHLL…LLAI), 323–343 (MLAY…IVGD), 354–374 (YMLF…LFGL), 395–415 (ALSL…AGFF), and 418–438 (LYLF…IGLL).

This sequence belongs to the complex I subunit 2 family. NDH is composed of at least 16 different subunits, 5 of which are encoded in the nucleus.

It is found in the plastid. Its subcellular location is the chloroplast thylakoid membrane. It catalyses the reaction a plastoquinone + NADH + (n+1) H(+)(in) = a plastoquinol + NAD(+) + n H(+)(out). It carries out the reaction a plastoquinone + NADPH + (n+1) H(+)(in) = a plastoquinol + NADP(+) + n H(+)(out). Functionally, NDH shuttles electrons from NAD(P)H:plastoquinone, via FMN and iron-sulfur (Fe-S) centers, to quinones in the photosynthetic chain and possibly in a chloroplast respiratory chain. The immediate electron acceptor for the enzyme in this species is believed to be plastoquinone. Couples the redox reaction to proton translocation, and thus conserves the redox energy in a proton gradient. This is NAD(P)H-quinone oxidoreductase subunit 2 A, chloroplastic from Saccharum officinarum (Sugarcane).